We begin with the raw amino-acid sequence, 209 residues long: 2,3-bisphosphoglycerate-dependent phosphoglycerate mutase (209 aa).

Substrate is bound by residues 8–15 (RHGQSEGN), 21–22 (TG), R60, 87–90 (ERDY), K98, 114–115 (RR), and 158–159 (GN). The active-site Tele-phosphohistidine intermediate is H9. E87 (proton donor/acceptor) is an active-site residue.

Belongs to the phosphoglycerate mutase family. BPG-dependent PGAM subfamily. As to quaternary structure, homodimer.

The enzyme catalyses (2R)-2-phosphoglycerate = (2R)-3-phosphoglycerate. Its pathway is carbohydrate degradation; glycolysis; pyruvate from D-glyceraldehyde 3-phosphate: step 3/5. Catalyzes the interconversion of 2-phosphoglycerate and 3-phosphoglycerate. The sequence is that of 2,3-bisphosphoglycerate-dependent phosphoglycerate mutase from Rhizobium etli (strain ATCC 51251 / DSM 11541 / JCM 21823 / NBRC 15573 / CFN 42).